We begin with the raw amino-acid sequence, 82 residues long: Small ribosomal subunit protein bS16 (82 aa).

Belongs to the bacterial ribosomal protein bS16 family.

The chain is Small ribosomal subunit protein bS16 from Bdellovibrio bacteriovorus (strain ATCC 15356 / DSM 50701 / NCIMB 9529 / HD100).